The sequence spans 293 residues: MSIVALLIGLGPLIGWGFFPTVASKFGGKPVHQIIGATVGTLIFAIILAVVTSSGFPTGTNLLFALLSGAGWGFGQIITFKAFELVGSSRAMPVTTAFQLLGASLWGVFALGNWPGIGHKIIGFTALVVILIGARMTVWSERKEASNAKNLRRAVVLLLIGEFGYWLYSAAPQATSIDGLTAFLPQAMGMVIVAVIYGFMNMKAENPFRNKITWLQIISGFFFAFGALTYLISAQPNMNGLATGFILSQTSVVLATLTGIYFLKQHKTSKEMVITIIGLVLILVAASVTVFIK.

10 consecutive transmembrane segments (helical) span residues 5-24 (ALLIGLGPLIGWGFFPTVAS), 34-51 (IIGATVGTLIFAIILAVV), 58-80 (TGTNLLFALLSGAGWGFGQIITF), 95-114 (TTAFQLLGASLWGVFALGNW), 121-138 (IIGFTALVVILIGARMTV), 153-170 (RAVVLLLIGEFGYWLYSA), 177-199 (IDGLTAFLPQAMGMVIVAVIYGF), 212-234 (ITWLQIISGFFFAFGALTYLISA), 241-263 (LATGFILSQTSVVLATLTGIYFL), and 273-292 (VITIIGLVLILVAASVTVFI).

This sequence belongs to the GRP transporter (TC 2.A.7.5) family.

Its subcellular location is the cell membrane. Could be involved in the uptake of ribose. The sequence is that of Putative ribose uptake protein RbsU (rbsU) from Staphylococcus aureus (strain COL).